The sequence spans 117 residues: DNA-binding protein RdgB (117 aa).

The H-T-H motif DNA-binding region spans 82-102 (NHSALAKKYNVSLQWIYKIVR).

Belongs to the c/mor transcriptional regulatory family.

Its function is as follows. Regulates pectin lyase production in response to DNA damage. This is DNA-binding protein RdgB (rdgB) from Pectobacterium carotovorum subsp. carotovorum (Erwinia carotovora subsp. carotovora).